Reading from the N-terminus, the 227-residue chain is Probable chorismate pyruvate-lyase (227 aa).

Arg75, Leu113, and Glu173 together coordinate substrate. The tract at residues 192–227 is disordered; that stretch reads SGDWSAHPRVREHGRPLEHTASRAHPATRASDEQRR. Basic and acidic residues predominate over residues 200 to 212; sequence RVREHGRPLEHTA.

It belongs to the UbiC family.

It localises to the cytoplasm. The enzyme catalyses chorismate = 4-hydroxybenzoate + pyruvate. It functions in the pathway cofactor biosynthesis; ubiquinone biosynthesis. Removes the pyruvyl group from chorismate, with concomitant aromatization of the ring, to provide 4-hydroxybenzoate (4HB) for the ubiquinone pathway. The sequence is that of Probable chorismate pyruvate-lyase from Paraburkholderia xenovorans (strain LB400).